The chain runs to 358 residues: MKLSSILLALAALVSPAFSYAISHLPRSEGGLDIKLTAIGNTRIKAIITNKADRPLKLLRYNNFFDDAPTQKVEIFKDGNAVQFEGIYQHIYMTDLPDEDFISLTPGESIEREVDIATTADLTQGGAFTISSQGLIPFAEVDSNEVTGAMAFHANDLEMDVDGAVAATVEKAIKPVDKRSRLTNSCTGQRRTATVRAIQASAQLSQRSAQVAQNNAQKLQEYFKQTDQRTRQLVVNRFTAVARESTVNGGRTTYDCTDRMGHCQPRTIAYTLPAQNHITNCPIFYQMPLLTNRCHGQDQATTVLHEITHNPAIVQPHCVDHGYGYQAVRRLNAQQSLQNADTYSLFANGKMTFRLFLY.

Residues 1–19 (MKLSSILLALAALVSPAFS) form the signal peptide. The propeptide occupies 20-179 (YAISHLPRSE…EKAIKPVDKR (160 aa)). Disulfide bonds link cysteine 186–cysteine 256 and cysteine 263–cysteine 281. Residue histidine 305 participates in Zn(2+) binding. Glutamate 306 is an active-site residue. Histidine 309 and aspartate 320 together coordinate Zn(2+).

It belongs to the peptidase M35 family. Zn(2+) serves as cofactor.

The protein resides in the secreted. It catalyses the reaction Preferential cleavage of bonds with hydrophobic residues in P1'. Also 3-Asn-|-Gln-4 and 8-Gly-|-Ser-9 bonds in insulin B chain.. Functionally, secreted metalloproteinase that allows assimilation of proteinaceous substrates. Shows high activities on basic nuclear substrates such as histone and protamine. May be involved in virulence. The polypeptide is Neutral protease 2 homolog MEP8 (MEP8) (Coccidioides posadasii (strain C735) (Valley fever fungus)).